The chain runs to 265 residues: DNA repair protein RecO (265 aa).

This sequence belongs to the RecO family.

Its function is as follows. Involved in DNA repair and RecF pathway recombination. The chain is DNA repair protein RecO from Mycobacterium ulcerans (strain Agy99).